We begin with the raw amino-acid sequence, 2408 residues long: MQNLEAQVTGSLVAFPDVTQKALKEDEINLDSVLRGKFSTGRTSLAWLACGPQLEITNSVTGERISAYHFSGLTERPPVVVAVKEFTWQKKTGLLVGLVEAEGSVLCLYDIGISKVVKAVVLPGSVTAVEPIINHGGASASTQHLHQSLRWFFGVTAVVTDVGHVLLIDLCLDEVSSNQDELDASDLEVMSVIPTKIPKLREAATRERRHLCLQLAAPTGTTVSCLSYISRTNQLAVGYSDGYFSLWNMKTLRRDYHVQIEGGRVPVCAVAFQEPENDPRNCCYLWAVQSSESGGDVSLHLLQLAFSDRKCLASGQIMYELLEYCEERYSLDLSGSTLSLRGQSNNTKLLGCQTIEKFRVHGEREDGVHEVTSPDTSVSVFSWQVNTYGQGKPSVYLGVFDINRWYQAQMPDSLRSGQFLRNCSYFAFWSLEAVVNITTQDIIFDILVHERSLSRGIPPSYPPPEQFYYPSTYNFDATCLLNSGLIHFACTGFQKETLHFLKKSGSSLNEAIPDGYNRCLAAGLLAPKFTDVQASSLSQEEQLQAILAAAVETSSLGLLTSCIKRWTAEEQPRSAANLRFVLEWTWKKVTLTKQEFDRLCFRLFDGSCNFIDPHTLQSLQQCHLYFSNLTAVLNCFIAQAKEVTQQGAVDLTNKQSVTRLLTLYASVVLWFCRSGMLPDSSDETVQLTRPFYNYQVIQQYYSDQRKKLERLARGKWDTSSLMIDGLINQFGDRIQQLWSRDDNGTGKYPPANLHALLDVYLLENADEMSKHAITIYFLLDIMYSFPDKPDSSIESFPTAFFVPGSLIKLIQGFWLLDHNDYQNSVDCILNPASSRVMSWQHSQIIENLLCHGDSRQALRYLQVMKPVATTSKEVKLHMTVLLANRSILEAWNLQRLHSSRLNVEELLKHMYEMCQEMGLIEELLKLTFTDFEQGYLHKFLQTTGVQNQELLLVHHLQRANYISALQLNQSLKTNHLNDCDRRLRERSGARNAILDQYGKILPRVQRTLASERAKPYSLPSLVWREVARPKPLSTTAKQAAPGSIITKANFICNVLSKIKEVSTANEKREEYSPYQSMVSEEPTAPPLQDIDVPDAFFGTPINKSRRVSRLLDSVVHPVLMEPTPLTSSDTDNNQTPHKSPLLKTSSPLHSSLRRIAHMRSFAKASEFSLLETPLVVRKAKALAANTASSGYTSITPQSILRSSVRTTPLVSPSVSPGRSLTPPLRPKETKISFMELSFTRHAKAAHSSEGNLLAISPVLRSSPDAVWSVKGKVASFTQNTPVKKLDEIDASSSGIQEESQDEMEVSKEISNISVRSEQASLEYHDAPTPEDLENDEISGTTNSQPQVNEVHHQMEDGQLTEKPAELALTEMQEEFIDSEEREIEYISAPLNGPNALECMTAVPDIYLEDASQCILETPEGSSVSVTGEQECVSSAKDSESVISIHDSDDAHSNLSENDQDSEEIEENNLRVPTTVTRCEEFDLIETKDLEVELEEADSEKTNYKDIYPDATVQLGFTVESIEQRYTCELADRRETPSETDEIEGEHFETENNFSLVLEGDVTEEEILEPSSSKTDLELTRPPIAHQKLISENRENIENCETTEKIPANMSPLVDSDHESKTLETLPSEADLSVAEKVLKGTEEKDVPPEVHSEVVLESKLVGNAMMSLDSSESQEVIISQYDNVISIEKLEMTQEKMYGEKTEQINEGQVSPNRDQSTLVKPLTPRRSIRKSSKPADSSTDIIGNITLPTTPKRGLKKAKENVDTLKNSISVVPEEELTLGTRRITRKATLTALDNPEPLQIKEPPSGEDLQVQPSTPTRGRRGKVITSDDLKEPPSGEDLQVQPSTPTRGRRGRVITSDDLREPPPGEDLQVQPSTPTRGRRGRVITSDDIKESPSVEDLQVQPSTPTRGRRGKVITSDDIKEPPSVEDLQVQPSTPTRGRKGKVITSDDIKEPLSGEDLQVQPSTPTRGRKGKVITSDDIKEPLSEEVLQEQPSTPTRGRRGRVITSDGKGYECVEEKNALPLTPTRITRSKNILEPEKGISQIEPEKGISQIEPDKGLSQIEDTGETEHEVVTPRRGRRGKRVVNELVKHFERNSSQPNIKADTSPPVSPKKVSLRWTRTRSENQRINATEEQASKIQEDLSDTPRKRYKKSSNKMGFEETTDTVTEGAIVEDVQESLIISHLGKNPNTSIVRSARKTALPPVTEDHSEQPLLPPESHSKVHSSLAIADEENKTNTRTRSGNKSSVDVSAITFEFSTPKARTKKTAKGSAVPTELIPSTQYVFSPPSTRTRRATRANVSEAVIEPQLQFQESCEIAETEVPEVPASKPRGRPPKHKAKAVTRVLKKPSWSTPPVEIKLISPPESPAVSETNTKTDSTEAKGAEKISVRRTRRRIIAKPVTRRKMR.

Residues 1–492 are seven-bladed beta propeller repeats; the sequence is MQNLEAQVTG…SGLIHFACTG (492 aa). The interval 1016–2408 is disordered; the sequence is YSLPSLVWRE…AKPVTRRKMR (1393 aa). Over residues 1124–1145 the composition is skewed to polar residues; sequence PLTSSDTDNNQTPHKSPLLKTS. Acidic residues predominate over residues 1457 to 1466; sequence NDQDSEEIEE. 2 stretches are compositionally biased toward polar residues: residues 1705–1719 and 1735–1750; these read INEGQVSPNRDQSTL and PADSSTDIIGNITLPT. The segment covering 2136–2149 has biased composition (basic and acidic residues); it reads QASKIQEDLSDTPR. Sufficient for chromatin-binding stretches follow at residues 2281–2359 and 2359–2408; these read STQY…PVEI and IKLI…RKMR. Positions 2281–2408 are sufficient to block nuclear pore assembly; the sequence is STQYVFSPPS…AKPVTRRKMR (128 aa). The segment at residues 2329–2341 is a DNA-binding region (a.T hook); it reads SKPRGRPPKHKAK. Basic residues predominate over residues 2331 to 2348; sequence PRGRPPKHKAKAVTRVLK. Over residues 2378-2389 the composition is skewed to basic and acidic residues; it reads DSTEAKGAEKIS.

This sequence belongs to the ELYS family. Interacts with the Nup107-160 subcomplex of the NPC.

Its subcellular location is the nucleus. It is found in the nuclear pore complex. The protein localises to the cytoplasm. It localises to the nucleoplasm. Its function is as follows. Required for the assembly of a functional nuclear pore complex (NPC) on the surface of chromosomes as nuclei form at the end of mitosis. May initiate NPC assembly by binding to chromatin and recruiting the Nup107-160 subcomplex, which may in turn recruit membrane vesicles containing pom121 and tmem48/ndc1. Association with chromatin may require the presence of the mcm2-mcm7 complex, suggesting a mechanism for coordination of nuclear assembly and the inactivation of replication licensing. The chain is Protein ELYS (ahctf1) from Xenopus laevis (African clawed frog).